The following is a 469-amino-acid chain: Citrate synthase, mitochondrial (469 aa).

A mitochondrion-targeting transit peptide spans 1–33 (MAPVMRLGSAALRSSIHLTSRQTAFTAARCYSS). H352 is an active-site residue.

It belongs to the citrate synthase family.

It localises to the mitochondrion matrix. It carries out the reaction oxaloacetate + acetyl-CoA + H2O = citrate + CoA + H(+). It functions in the pathway carbohydrate metabolism; tricarboxylic acid cycle; isocitrate from oxaloacetate: step 1/2. This Neurospora crassa (strain ATCC 24698 / 74-OR23-1A / CBS 708.71 / DSM 1257 / FGSC 987) protein is Citrate synthase, mitochondrial (cit-1).